Reading from the N-terminus, the 85-residue chain is Putative RING finger protein 095L (85 aa).

The RING-type; degenerate zinc finger occupies 39 to 73 (CPIWYNYQVNTVFLPCAHVACYLCSKIIKNCHLCR).

The chain is Putative RING finger protein 095L from Invertebrate iridescent virus 6 (IIV-6).